The sequence spans 484 residues: Diaminopimelate decarboxylase 1, chloroplastic (484 aa).

Positions 1–28 (MAAATQFLSQPSSLNPHQLKNQTSQRSR) are enriched in polar residues. Residues 1–30 (MAAATQFLSQPSSLNPHQLKNQTSQRSRSI) are disordered. Residues 1–49 (MAAATQFLSQPSSLNPHQLKNQTSQRSRSIPVLSLKSTLKPLKRLSVKA) constitute a chloroplast transit peptide. Residue Ala50 is modified to N-acetylalanine. Lys125 is subject to N6-(pyridoxal phosphate)lysine. Pyridoxal 5'-phosphate-binding positions include Gly304 and 340–343 (EPGR). Substrate-binding residues include Arg343, Arg379, and Tyr383. The active-site Proton donor is the Cys411. Residues Glu412 and Tyr440 each contribute to the substrate site. Residue Tyr440 participates in pyridoxal 5'-phosphate binding.

The protein belongs to the Orn/Lys/Arg decarboxylase class-II family. LysA subfamily. Homodimer. Requires pyridoxal 5'-phosphate as cofactor.

The protein localises to the plastid. It localises to the chloroplast. The catalysed reaction is meso-2,6-diaminopimelate + H(+) = L-lysine + CO2. The protein operates within amino-acid biosynthesis; L-lysine biosynthesis via DAP pathway; L-lysine from DL-2,6-diaminopimelate: step 1/1. In terms of biological role, specifically catalyzes the decarboxylation of meso-diaminopimelate (meso-DAP) to L-lysine. This is Diaminopimelate decarboxylase 1, chloroplastic (LYSA1) from Arabidopsis thaliana (Mouse-ear cress).